Consider the following 351-residue polypeptide: D-alanine--D-alanine ligase (351 aa).

The ATP-grasp domain maps to 135–343; sequence NQIFLQSGQK…MEEVFSDLIE (209 aa). 167-222 contacts ATP; that stretch reads LETLGFPQFLKPVEGGSSVSVYKITNREQLKEKLALIFESDSKVMSQSFLTGIEVS. Residues Asp-298, Glu-310, and Asn-312 each contribute to the Mg(2+) site.

This sequence belongs to the D-alanine--D-alanine ligase family. Mg(2+) serves as cofactor. Requires Mn(2+) as cofactor.

The protein localises to the cytoplasm. It carries out the reaction 2 D-alanine + ATP = D-alanyl-D-alanine + ADP + phosphate + H(+). Its pathway is cell wall biogenesis; peptidoglycan biosynthesis. Its function is as follows. Cell wall formation. This chain is D-alanine--D-alanine ligase, found in Leptospira interrogans serogroup Icterohaemorrhagiae serovar copenhageni (strain Fiocruz L1-130).